We begin with the raw amino-acid sequence, 170 residues long: NADH-quinone oxidoreductase subunit B (170 aa).

Positions 37, 38, 102, and 131 each coordinate [4Fe-4S] cluster.

The protein belongs to the complex I 20 kDa subunit family. NDH-1 is composed of 14 different subunits. Subunits NuoB, C, D, E, F, and G constitute the peripheral sector of the complex. [4Fe-4S] cluster is required as a cofactor.

Its subcellular location is the cell inner membrane. It catalyses the reaction a quinone + NADH + 5 H(+)(in) = a quinol + NAD(+) + 4 H(+)(out). NDH-1 shuttles electrons from NADH, via FMN and iron-sulfur (Fe-S) centers, to quinones in the respiratory chain. The immediate electron acceptor for the enzyme in this species is believed to be ubiquinone. Couples the redox reaction to proton translocation (for every two electrons transferred, four hydrogen ions are translocated across the cytoplasmic membrane), and thus conserves the redox energy in a proton gradient. This Geotalea uraniireducens (strain Rf4) (Geobacter uraniireducens) protein is NADH-quinone oxidoreductase subunit B.